Reading from the N-terminus, the 205-residue chain is H/ACA ribonucleoprotein complex subunit GAR1 (205 aa).

Over residues methionine 1–threonine 23 the composition is skewed to gly residues. Residues methionine 1–glutamine 31 are disordered. Arginine 4 is modified (asymmetric dimethylarginine; by HMT1). The segment at arginine 4 to glycine 21 is RGG-box 1. Arginine 8 is modified (asymmetric dimethylarginine; by HMT1; alternate). Arginine 8 carries the omega-N-methylarginine; by HMT1; alternate modification. Arginine 11 carries the asymmetric dimethylarginine; by HMT1 modification. The residue at position 15 (arginine 15) is an Asymmetric dimethylarginine; by HMT1; alternate. An Omega-N-methylarginine; by HMT1; alternate modification is found at arginine 15. Arginine 19 carries the asymmetric dimethylarginine; by HMT1 modification. Lysine 77 participates in a covalent cross-link: Glycyl lysine isopeptide (Lys-Gly) (interchain with G-Cter in ubiquitin). Residues proline 124–arginine 205 form a disordered region. Residues alanine 143–arginine 205 show a composition bias toward gly residues. 3 positions are modified to asymmetric dimethylarginine; by HMT1; alternate: arginine 147, arginine 154, and arginine 158. 3 positions are modified to omega-N-methylarginine; by HMT1; alternate: arginine 147, arginine 154, and arginine 158. Residues arginine 147–arginine 205 form an RGG-box 2 region. Asymmetric dimethylarginine; by HMT1 is present on arginine 162. Arginine 165 is modified (asymmetric dimethylarginine; by HMT1; alternate). Arginine 165 is modified (omega-N-methylarginine; by HMT1; alternate). Arginine 171 and arginine 174 each carry asymmetric dimethylarginine; by HMT1. Omega-N-methylarginine; by HMT1 occurs at positions 180 and 184. Arginine 189 is modified (asymmetric dimethylarginine; by HMT1; alternate). At arginine 189 the chain carries Omega-N-methylarginine; by HMT1; alternate. Asymmetric dimethylarginine; by HMT1 is present on residues arginine 193, arginine 197, and arginine 201.

This sequence belongs to the GAR1 family. As to quaternary structure, component of the small nucleolar ribonucleoprotein particles containing H/ACA-type snoRNAs (H/ACA snoRNPs). The protein component of the H/ACA snoRNP contains CBF5, GAR1, NHP2 and NOP10. The complex contains a stable core composed of CBF5 and NOP10, to which GAR1 and NHP2 subsequently bind. Interacts with snoRNAs. In terms of processing, methylated by HMT1, forming asymmetric dimethylarginines (DMA) within a domain referred to as an RGG box, made up of repeated Gly-Gly dipeptides interspersed with Arg and aromatic residues.

It localises to the nucleus. It is found in the nucleolus. In terms of biological role, non-catalytic component of the H/ACA small nucleolar ribonucleoprotein (H/ACA snoRNP), which catalyzes pseudouridylation of rRNA and is required for ribosome biogenesis. This involves the isomerization of uridine such that the ribose is subsequently attached to C5, instead of the normal N1. Pseudouridine ('psi') residues may serve to stabilize the conformation of rRNAs. The H/ACA snoRNP complex also mediates pseudouridylation of other types of RNAs. The H/ACA snoRNP complex mediates pseudouridylation at position 93 in U2 snRNA. Essential for growth. This Saccharomyces cerevisiae (strain ATCC 204508 / S288c) (Baker's yeast) protein is H/ACA ribonucleoprotein complex subunit GAR1.